The following is a 503-amino-acid chain: GMP synthase [glutamine-hydrolyzing] (503 aa).

One can recognise a Glutamine amidotransferase type-1 domain in the interval 3-189; the sequence is PVLVVDFGSQ…AFLSSFAAPN (187 aa). The active-site Nucleophile is Cys-80. Active-site residues include His-165 and Glu-167. One can recognise a GMPS ATP-PPase domain in the interval 190 to 380; it reads WDPEQTICGT…LGIPKHIVHR (191 aa). An ATP-binding site is contributed by 217–223; that stretch reads SGGVDSV.

As to quaternary structure, homodimer.

It catalyses the reaction XMP + L-glutamine + ATP + H2O = GMP + L-glutamate + AMP + diphosphate + 2 H(+). Its pathway is purine metabolism; GMP biosynthesis; GMP from XMP (L-Gln route): step 1/1. In terms of biological role, catalyzes the synthesis of GMP from XMP. The chain is GMP synthase [glutamine-hydrolyzing] from Tropheryma whipplei (strain TW08/27) (Whipple's bacillus).